Here is a 515-residue protein sequence, read N- to C-terminus: Maturase K (515 aa).

It belongs to the intron maturase 2 family. MatK subfamily.

Its subcellular location is the plastid. It localises to the chloroplast. Usually encoded in the trnK tRNA gene intron. Probably assists in splicing its own and other chloroplast group II introns. This Zingiber mioga (Myoga ginger) protein is Maturase K.